We begin with the raw amino-acid sequence, 114 residues long: Small ribosomal subunit protein bS6 (114 aa).

This sequence belongs to the bacterial ribosomal protein bS6 family.

Its function is as follows. Binds together with bS18 to 16S ribosomal RNA. This Thermosynechococcus vestitus (strain NIES-2133 / IAM M-273 / BP-1) protein is Small ribosomal subunit protein bS6.